The following is a 375-amino-acid chain: Mitochondrial phosphate carrier protein 3, mitochondrial (375 aa).

A helical transmembrane segment spans residues 76–96 (AFYAACTFGGILSCGLTHMTV). Solcar repeat units follow at residues 76–160 (AFYA…FKKT), 173–257 (YKTL…IVEM), and 274–353 (LQLG…FKVF). The Mitochondrial matrix segment spans residues 97 to 134 (TPLDLVKCNMQIDPAKYKSISSGFGILLKEQGVKGFFR). A helical membrane pass occupies residues 135 to 154 (GWVPTLLGYSAQGACKFGFY). Residues 155-175 (EYFKKTYSDLAGPEYTAKYKT) are Mitochondrial intermembrane-facing. The helical transmembrane segment at 176–196 (LIYLAGSASAEIIADIALCPF) threads the bilayer. Residues 197 to 231 (EAVKVRVQTQPGFARGMSDGFPKFIKSEGYGGLYK) lie on the Mitochondrial matrix side of the membrane. A helical transmembrane segment spans residues 232 to 251 (GLAPLWGRQIPYTMMKFASF). Residues 252 to 272 (ETIVEMIYKYAIPNPKSECSK) lie on the Mitochondrial intermembrane side of the membrane. Residues 273–293 (GLQLGVSFAGGYVAGVFCAIV) traverse the membrane as a helical segment. Topologically, residues 294 to 332 (SHPADNLVSFLNNAKGATVGDAVKKIGMVGLFTRGLPLR) are mitochondrial matrix. A helical membrane pass occupies residues 333 to 353 (IVMIGTLTGAQWGLYDAFKVF). Over 354 to 375 (VGLPTTGGVAPAPAIAATEAKA) the chain is Mitochondrial intermembrane.

This sequence belongs to the mitochondrial carrier (TC 2.A.29) family. As to expression, expressed in stems, leaves and flowers. Strong expression in vascular tissues.

The protein resides in the mitochondrion inner membrane. In terms of biological role, transport of phosphate groups from the cytosol to the mitochondrial matrix. Mediates salt stress tolerance through an ATP-dependent pathway and via modulation of the gibberellin metabolism. The sequence is that of Mitochondrial phosphate carrier protein 3, mitochondrial (MPT3) from Arabidopsis thaliana (Mouse-ear cress).